Consider the following 585-residue polypeptide: uncharacterized protein (585 aa).

To E.coli YejM.

This is an uncharacterized protein from Haemophilus influenzae (strain ATCC 51907 / DSM 11121 / KW20 / Rd).